The chain runs to 467 residues: F-box protein pof9 (467 aa).

In terms of domain architecture, F-box spans 3–49 (KSPFLELSYDILLEISTYLDYKDIVHLSETCKSLSYVFDDKTIWHRF). RCC1 repeat units lie at residues 77–131 (RGYA…LLNE), 302–354 (ETFT…YLTS), and 355–417 (DHSI…AAGG).

Interacts with skp1.

It is found in the cytoplasm. The protein resides in the nucleus. The chain is F-box protein pof9 (pof9) from Schizosaccharomyces pombe (strain 972 / ATCC 24843) (Fission yeast).